Here is a 428-residue protein sequence, read N- to C-terminus: Histidine--tRNA ligase (428 aa).

Belongs to the class-II aminoacyl-tRNA synthetase family. Homodimer.

It is found in the cytoplasm. The enzyme catalyses tRNA(His) + L-histidine + ATP = L-histidyl-tRNA(His) + AMP + diphosphate + H(+). The polypeptide is Histidine--tRNA ligase (Ectopseudomonas mendocina (strain ymp) (Pseudomonas mendocina)).